The chain runs to 687 residues: Protein Smaug homolog 2 (687 aa).

The span at 160 to 172 (TRPEPSYHSRQGS) shows a compositional bias: basic and acidic residues. Residues 160–301 (TRPEPSYHSR…NTFQEDGSGM (142 aa)) are disordered. Serine 172 bears the Phosphoserine mark. Composition is skewed to low complexity over residues 175-190 (WGGP…GPGW) and 200-211 (HVPFHPSSSVPP). The span at 215 to 224 (SIGSNANTGL) shows a compositional bias: polar residues. 4 positions are modified to phosphoserine: serine 271, serine 278, serine 279, and serine 281. Low complexity predominate over residues 278 to 290 (SSGSEQTEEQGSS). Residues 299 to 372 (SGMKDVPSWL…LKSLEKDVLE (74 aa)) form the SAM domain. A Phosphothreonine modification is found at threonine 400. The segment at 402 to 464 (TAKDEGRGEP…APAPVADGDI (63 aa)) is disordered. Over residues 424 to 435 (GSDKGTEAKDPP) the composition is skewed to basic and acidic residues. Low complexity predominate over residues 448–461 (PSDSSEPAPAPVAD). Serine 548, serine 550, serine 556, serine 585, and serine 593 each carry phosphoserine. Arginine 595 is modified (asymmetric dimethylarginine). The disordered stretch occupies residues 600–636 (SPSLGGQGRQNLWFANPGGSNSMPSQSRSSVQRTHSL). Positions 617 to 636 (GGSNSMPSQSRSSVQRTHSL) are enriched in polar residues. Serine 621 carries the phosphoserine modification.

The protein belongs to the SMAUG family.

The protein resides in the cytoplasm. Its subcellular location is the nucleus. In terms of biological role, has transcriptional repressor activity. Overexpression inhibits the transcriptional activities of AP-1, p53/TP53 and CDKN1A. This Mus musculus (Mouse) protein is Protein Smaug homolog 2 (Samd4b).